The primary structure comprises 707 residues: Elongation factor G (707 aa).

Residues 8-296 (ERYRNFGIMA…AVVDFLPAPT (289 aa)) form the tr-type G domain. Residues 17–24 (AHIDAGKT), 94–98 (DTPGH), and 148–151 (NKMD) each bind GTP.

It belongs to the TRAFAC class translation factor GTPase superfamily. Classic translation factor GTPase family. EF-G/EF-2 subfamily.

Its subcellular location is the cytoplasm. Its function is as follows. Catalyzes the GTP-dependent ribosomal translocation step during translation elongation. During this step, the ribosome changes from the pre-translocational (PRE) to the post-translocational (POST) state as the newly formed A-site-bound peptidyl-tRNA and P-site-bound deacylated tRNA move to the P and E sites, respectively. Catalyzes the coordinated movement of the two tRNA molecules, the mRNA and conformational changes in the ribosome. This is Elongation factor G from Paracoccus denitrificans (strain Pd 1222).